Here is a 96-residue protein sequence, read N- to C-terminus: MNIRPLHDRVVVRRMEEERLSAGGIVIPDSATEKPIQGEIIAVGHGKILDNGSVRALDVKVGDSVLFGKYSGTEVKLDGKEFLVMREEDIMAVVEG.

This sequence belongs to the GroES chaperonin family. Heptamer of 7 subunits arranged in a ring. Interacts with the chaperonin GroEL.

It localises to the cytoplasm. Its function is as follows. Together with the chaperonin GroEL, plays an essential role in assisting protein folding. The GroEL-GroES system forms a nano-cage that allows encapsulation of the non-native substrate proteins and provides a physical environment optimized to promote and accelerate protein folding. GroES binds to the apical surface of the GroEL ring, thereby capping the opening of the GroEL channel. The polypeptide is Co-chaperonin GroES (Allochromatium vinosum (Chromatium vinosum)).